The primary structure comprises 300 residues: tRNA dimethylallyltransferase (300 aa).

11–18 is an ATP binding site; sequence GPTAVGKS. 13 to 18 provides a ligand contact to substrate; the sequence is TAVGKS. The interval 35 to 38 is interaction with substrate tRNA; it reads DSIQ.

The protein belongs to the IPP transferase family. As to quaternary structure, monomer. Mg(2+) is required as a cofactor.

The enzyme catalyses adenosine(37) in tRNA + dimethylallyl diphosphate = N(6)-dimethylallyladenosine(37) in tRNA + diphosphate. Its function is as follows. Catalyzes the transfer of a dimethylallyl group onto the adenine at position 37 in tRNAs that read codons beginning with uridine, leading to the formation of N6-(dimethylallyl)adenosine (i(6)A). This Borrelia duttonii (strain Ly) protein is tRNA dimethylallyltransferase.